Consider the following 1059-residue polypeptide: DNA (cytosine-5)-methyltransferase CMT1 (1059 aa).

Disordered regions lie at residues 1–196 and 230–272; these read MVPE…GALA and CVGE…DEAR. The span at 29–41 shows a compositional bias: acidic residues; it reads AEAEAVADLDEID. Composition is skewed to basic and acidic residues over residues 42–79, 92–129, and 147–157; these read REMS…EKAA, REMP…EKAA, and SRGKRQRGVEK. Basic residues predominate over residues 158-167; the sequence is VKRRTRKKTA. Residues 252–262 show a composition bias toward basic and acidic residues; sequence RRVEDSDDHFV. The region spanning 312–436 is the BAH domain; the sequence is EIYHLDDDVY…VAYSTFANLP (125 aa). In terms of domain architecture, SAM-dependent MTase C5-type spans 479-1017; sequence ASLLDLYSGC…YALGLAYRGE (539 aa). The region spanning 584–649 is the Chromo domain; that stretch reads FDVEELLEIC…KGHKENILPL (66 aa). Cys662 is a catalytic residue.

This sequence belongs to the class I-like SAM-binding methyltransferase superfamily. C5-methyltransferase family.

It localises to the nucleus. The enzyme catalyses a 2'-deoxycytidine in DNA + S-adenosyl-L-methionine = a 5-methyl-2'-deoxycytidine in DNA + S-adenosyl-L-homocysteine + H(+). Functionally, involved in CpXpG DNA methylation. May not play a major role in maintaining CpXpG methylation. The polypeptide is DNA (cytosine-5)-methyltransferase CMT1 (Oryza sativa subsp. japonica (Rice)).